Here is a 1530-residue protein sequence, read N- to C-terminus: MPIRPDLQQLEKCIDDALRKNDFKPLKTLLQIDICEDVKIKCSKQFFHKVDNLICRELNKEDIHNVSAILVSVGRCGKNISVLGQAGLLTMIKQGLIQKMVAWFEKSKDIIQSQGNSKDEAVLNMIEDLVDLLLVIHDVSDEGKKQVVESFVPRICSLVIDSRVNICIQQEIIKKMNAMLDKMPQDARKILSNQEMLILMSSMGERILDAGDYDLQVGIVEALCRMTTEKQRQELAHQWFSMDFIAKAFKRIKDSEFETDCRIFLNLVNGMLGDKRRVFTFPCLSAFLDKYELQIPSDEKLEEFWIDFNLGSQTLSFYIAGDNDDHQWEAVTVPEEKVQIYSIEVRESKKLLTIILKNTVKISKREGKELLLYFDASLEITNVTQKIFGATKHRESIRKQGISVAKTSLHILFDASGSQILVPESQISPVGEELVSLKEKSKSPKEFAKPSKYIKNSDKGNRNNSQLEKTTPSKRKMSEASMIVSGADRYTMRSPVLFSNTSIPPRRRRIKPPLQMTSSAEKPSVSQTSENRVDNAASLKSRSSEGRHRRDNIDKHIKTAKCVENTENKNVEFPNQNFSELQDVIPDSQAAEKRDHTILPGVLDNICGNKIHSKWACWTPVTNIELCNNQRASTSSGDTLNQDIVINKKLTKQKSSSSISDHNSEGTGKVKYKKEQTDHIKIDKAEVEVCKKHNQQQNHPKYSGQKNTENAKQSDWPVESETTFKSVLLNKTIEESLIYRKKYILSKDVNTATCDKNPSASKNVQSHRKAEKELTSELNSWDSKQKKMREKSKGKEFTNVAESLISQINKRYKTKDDIKSTRKLKESLINSGFSNKPVVQLSKEKVQKKSYRKLKTTFVNVTSECPVNDVYNFNLNGADDPIIKLGIQEFQATAKEACADRSIRLVGPRNHDELKSSVKTKDKKIITNHQKKNLFSDTETEYRCDDSKTDISWLREPKSKPQLIDYSRNKNVKNHKSGKSRSSLEKGQPSSKMTPSKNITKKMDKTIPEGRIRLPRKATKTKKNYKDLSNSESECEQEFSHSFKENIPVKEENIHSRMKTVKLPKKQQKVFCAETEKELSKQWKNSSLLKDAIRDNCLDLSPRSLSGSPSSIEVTRCIEKITEKDFTQDYDCITKSISPYPKTSSLESLNSNSGVGGTIKSPKNNEKNFLCASESCSPIPRPLFLPRHTPTKSNTIVNRKKISSLVLTQETQNSNSYSDVSSYSSEERFMEIESPHINENYIQSKREESHLASSLSKSSEGREKTWFDMPCDATHVSGPTQHLSRKRIYIEDNLSNSNEVEMEEKGERRANLLPKKLCKIEDADHHIHKMSESVSSLSTNDFSIPWETWQNEFAGIEMTYETYERLNSEFKRRNNIRHKMLSYFTTQSWKTAQQHLRTMNHQSQDSRIKKLDKFQFIIIEELENFEKDSQSLKDLEKEFVDFWEKIFQKFSAYQKSEQQRLHLLKTSLAKSVFCNTDSEETVFTSEMCLMKEDMKVLQDRLLKDMLEEELLNVRRELMSVFMSHERNANV.

Residues 439 to 461 (EKSKSPKEFAKPSKYIKNSDKGN) are compositionally biased toward basic and acidic residues. The interval 439–480 (EKSKSPKEFAKPSKYIKNSDKGNRNNSQLEKTTPSKRKMSEA) is disordered. Residues Ser-457 and Ser-465 each carry the phosphoserine modification. Thr-471 is modified (phosphothreonine). 4 positions are modified to phosphoserine: Ser-494, Ser-519, Ser-529, and Ser-538. The tract at residues 496–555 (VLFSNTSIPPRRRRIKPPLQMTSSAEKPSVSQTSENRVDNAASLKSRSSEGRHRRDNIDK) is disordered. A compositionally biased stretch (polar residues) spans 515–530 (QMTSSAEKPSVSQTSE). Over residues 542 to 555 (RSSEGRHRRDNIDK) the composition is skewed to basic and acidic residues. Thr-619 carries the post-translational modification Phosphothreonine. Disordered stretches follow at residues 653-676 (QKSS…KKEQ), 693-717 (HNQQ…SDWP), and 755-795 (DKNP…SKGK). Residues Ser-660 and Ser-664 each carry the phosphoserine modification. 2 stretches are compositionally biased toward polar residues: residues 695 to 713 (QQQN…NAKQ) and 755 to 764 (DKNPSASKNV). Ser-936 carries the post-translational modification Phosphoserine. At Thr-938 the chain carries Phosphothreonine. The tract at residues 962–1003 (QLIDYSRNKNVKNHKSGKSRSSLEKGQPSSKMTPSKNITKKM) is disordered. Over residues 970 to 979 (KNVKNHKSGK) the composition is skewed to basic residues. Residues 988 to 998 (QPSSKMTPSKN) are compositionally biased toward polar residues. A phosphoserine mark is found at Ser-1136, Ser-1138, Ser-1145, Ser-1161, and Ser-1177. Thr-1189 is subject to Phosphothreonine. A phosphoserine mark is found at Ser-1204, Ser-1234, Ser-1253, Ser-1295, and Ser-1297. Thr-1339 is subject to Phosphothreonine.

It belongs to the SYCP2 family. As to quaternary structure, component of the lateral elements of synaptonemal complexes. Heterodimer with SYCP3. Interacts with SMC1A and SMC3. Interacts with TEX11. In terms of processing, phosphorylated.

It localises to the nucleus. The protein resides in the chromosome. Major component of the axial/lateral elements of synaptonemal complexes (SCS) during meiotic prophase. Plays a role in the assembly of synaptonemal complexes. Required for normal meiotic chromosome synapsis during oocyte and spermatocyte development and for normal male and female fertility. Required for insertion of SYCP3 into synaptonemal complexes. May be involved in the organization of chromatin by temporarily binding to DNA scaffold attachment regions. Requires SYCP3, but not SYCP1, in order to be incorporated into the axial/lateral elements. This Homo sapiens (Human) protein is Synaptonemal complex protein 2 (SYCP2).